We begin with the raw amino-acid sequence, 326 residues long: Vomeronasal type-1 receptor 94 (326 aa).

At 1–32 the chain is on the extracellular side; it reads MSEILLFSPQPLFSYTMNKYSRLYTNSNIRNT. The chain crosses the membrane as a helical span at residues 33 to 53; sequence FFSEIGIGIAANSLLLLFHIF. Topologically, residues 54-65 are cytoplasmic; it reads KFIRGQRSRLTD. A helical membrane pass occupies residues 66-86; sequence LPIGLLSLIHLLKLLMIAFIA. Residues 87–110 lie on the Extracellular side of the membrane; sequence TDIFISWRGWDDIICKFLVYLYRS. Cys101 and Cys188 are disulfide-bonded. A helical membrane pass occupies residues 111–130; it reads FRGLSLCTTCMLSVLQAITL. Topologically, residues 131–150 are cytoplasmic; it reads SPRSSCLAKFKHKSPHHVSC. The chain crosses the membrane as a helical span at residues 151–171; it reads AILSLSVLYMFISSHLLVSLI. The Extracellular portion of the chain corresponds to 172–203; that stretch reads ATPNLTTNVFMYVSESCSILPMSYLMQSMFST. A glycan (N-linked (GlcNAc...) asparagine) is linked at Asn175. Residues 204–224 form a helical membrane-spanning segment; the sequence is LLAIRDVFLISLMVLSTCYMV. The Cytoplasmic portion of the chain corresponds to 225–254; that stretch reads ALLCRHRKQTRHLQGTSLSPKASPEKKATH. The helical transmembrane segment at 255 to 275 threads the bilayer; that stretch reads SILMLMSFFVLMSILDSIVSC. At 276–285 the chain is on the extracellular side; sequence SRTMFLYDPT. A helical membrane pass occupies residues 286–306; the sequence is SYAIQIFVSHIYATVSPFVFM. The Cytoplasmic portion of the chain corresponds to 307–326; it reads SNEKHIVNFLRSLCKRVINV.

It belongs to the G-protein coupled receptor 1 family.

The protein localises to the cell membrane. Its function is as follows. Putative pheromone receptor implicated in the regulation of social as well as reproductive behavior. This Rattus norvegicus (Rat) protein is Vomeronasal type-1 receptor 94 (Vom1r94).